The sequence spans 421 residues: Thymidine phosphorylase (421 aa).

It belongs to the thymidine/pyrimidine-nucleoside phosphorylase family. In terms of assembly, homodimer.

It carries out the reaction thymidine + phosphate = 2-deoxy-alpha-D-ribose 1-phosphate + thymine. Its function is as follows. The enzymes which catalyze the reversible phosphorolysis of pyrimidine nucleosides are involved in the degradation of these compounds and in their utilization as carbon and energy sources, or in the rescue of pyrimidine bases for nucleotide synthesis. This Mycoplasma genitalium (strain ATCC 33530 / DSM 19775 / NCTC 10195 / G37) (Mycoplasmoides genitalium) protein is Thymidine phosphorylase (deoA).